The chain runs to 162 residues: Inorganic pyrophosphatase (162 aa).

Glu8 contributes to the Mg(2+) binding site. The substrate site is built by Lys16, Arg30, and Tyr42. Residues Asp52, Asp57, Asp84, and Asp89 each contribute to the Mg(2+) site. Asp89 acts as the Proton acceptor in catalysis. A substrate-binding site is contributed by Tyr126.

It belongs to the PPase family. Homohexamer. It depends on Mg(2+) as a cofactor.

It localises to the cytoplasm. The catalysed reaction is diphosphate + H2O = 2 phosphate + H(+). Functionally, catalyzes the hydrolysis of inorganic pyrophosphate (PPi) forming two phosphate ions. The polypeptide is Inorganic pyrophosphatase (Mycobacterium leprae (strain TN)).